Reading from the N-terminus, the 637-residue chain is MEFGKRYKAKDYDVIVVGAGHAGCEAALASARMGNETLLITINLEMVAFMPCNPSIGGPAKGIVVREIDAMGGEMGRNIDKTYVQMRMLNTGKGPAVRALRAQADKRQYSIEMKHTIEQTPHLTLRQGIVDDLIIEDGEVKGVVTNTGACYGAKSVVLTTGTAARGKIIIGELMYSSGPNNTQPALELSKNLAKLGFELKRFKTGTPPRVDGNTIDYDKTEEQPGDVEPNHFSYESKDEDYLKVKDQLSCWLTYTNEYTHKIIQDNLDRAPMFTGVIEGVGPRYCPSIEDKIVRFSDKPRHQLFLEPEGRNTDEYYVQGLSTSLPEEVQQEMVRSIDGLEHAEMMRPGYAIEYDVVSPYQLRPTLETKLIKGLYTAGQTNGTSGYEEAAGQGFIAGVNAGRRAKGLEEITLKRSDAYIGVMIDDLVTKGTNEPYRLLTSRAEYRLILRHDNADLRLTELGHEIGLISDERYAAFEEKKAQIEAEKQRLSKIRIKPNAEVNAFVEAHGDRELKDGVLATEFLRRPYVTYQDLLKFIPAPAEPLDRRVIEQIEIQFKYEGYIKKEYAKVEKLKRMEAKKIPARIDYSRIEGIATEAQQKLAKIQPETLAQAGRISGVNPADLSILAVYIEQGKIARVDD.

18 to 23 (GAGHAG) serves as a coordination point for FAD. Residue 281–295 (GPRYCPSIEDKIVRF) participates in NAD(+) binding.

It belongs to the MnmG family. In terms of assembly, homodimer. Heterotetramer of two MnmE and two MnmG subunits. The cofactor is FAD.

It localises to the cytoplasm. Functionally, NAD-binding protein involved in the addition of a carboxymethylaminomethyl (cmnm) group at the wobble position (U34) of certain tRNAs, forming tRNA-cmnm(5)s(2)U34. The chain is tRNA uridine 5-carboxymethylaminomethyl modification enzyme MnmG from Ligilactobacillus salivarius (strain UCC118) (Lactobacillus salivarius).